A 293-amino-acid polypeptide reads, in one-letter code: Glutamine sensor pib2 (293 aa).

A disordered region spans residues 38–75; the sequence is APTRQATNGTGSVSGSPNSSSNSTPANQGSLPSHTNPQ. A compositionally biased stretch (low complexity) spans 44 to 62; that stretch reads TNGTGSVSGSPNSSSNSTP. Positions 63-75 are enriched in polar residues; it reads ANQGSLPSHTNPQ. The FYVE-type; degenerate zinc-finger motif lies at 156 to 220; it reads DVSVCSFPSC…SCVSCFYEYL (65 aa). Zn(2+) is bound by residues C178, C181, C212, and C215. Polar residues predominate over residues 242–256; that stretch reads APQQATTHPPSQPKN. The interval 242 to 276 is disordered; it reads APQQATTHPPSQPKNAVSVPIPKMDSTDSKGELPS. S259 carries the phosphoserine modification.

Interacts with the TORC1 complex when activated by glutamine or cysteine.

The protein localises to the vacuole membrane. Its activity is regulated as follows. Activated by glutamine. Its function is as follows. Functions as an intracellular glutamine sensor that directly activates the TORC1 signaling pathway, to promote cell growth when glutamine is available. The protein is Glutamine sensor pib2 of Schizosaccharomyces pombe (strain 972 / ATCC 24843) (Fission yeast).